Consider the following 470-residue polypeptide: Ribosomal protein uS12 methylthiotransferase RimO (470 aa).

In terms of domain architecture, MTTase N-terminal spans 4–120 (TRVYLHTLGC…IARVVSDAQA (117 aa)). Residues C13, C49, C83, C155, C159, and C162 each coordinate [4Fe-4S] cluster. The Radical SAM core domain occupies 141 to 371 (SLPSHTAYLK…MALQQEISRE (231 aa)). One can recognise a TRAM domain in the interval 374–442 (RAMVGRRLEV…EYDLVGHVVA (69 aa)). Positions 447-470 (RARRPLPAPAGGETPRRGGLPVVG) are disordered.

The protein belongs to the methylthiotransferase family. RimO subfamily. The cofactor is [4Fe-4S] cluster.

The protein localises to the cytoplasm. The enzyme catalyses L-aspartate(89)-[ribosomal protein uS12]-hydrogen + (sulfur carrier)-SH + AH2 + 2 S-adenosyl-L-methionine = 3-methylsulfanyl-L-aspartate(89)-[ribosomal protein uS12]-hydrogen + (sulfur carrier)-H + 5'-deoxyadenosine + L-methionine + A + S-adenosyl-L-homocysteine + 2 H(+). In terms of biological role, catalyzes the methylthiolation of an aspartic acid residue of ribosomal protein uS12. This Anaeromyxobacter sp. (strain Fw109-5) protein is Ribosomal protein uS12 methylthiotransferase RimO.